The chain runs to 215 residues: Cytidylate kinase (215 aa).

ATP is bound at residue 11 to 19 (GPTASGKGT).

It belongs to the cytidylate kinase family. Type 1 subfamily.

The protein localises to the cytoplasm. The catalysed reaction is CMP + ATP = CDP + ADP. It carries out the reaction dCMP + ATP = dCDP + ADP. In Polynucleobacter necessarius subsp. necessarius (strain STIR1), this protein is Cytidylate kinase.